Consider the following 366-residue polypeptide: Purple acid phosphatase 3 (366 aa).

The first 32 residues, 1 to 32 (MTYIYRDTKITTKSTIPFLIFFLFCFSNLSMA), serve as a signal peptide directing secretion. Aspartate 81 is a binding site for Fe cation. Residue asparagine 89 is glycosylated (N-linked (GlcNAc...) asparagine). Residues aspartate 114 and tyrosine 117 each contribute to the Fe cation site. Aspartate 114 serves as a coordination point for Zn(2+). 2 residues coordinate Zn(2+): asparagine 152 and histidine 246. The active-site Proton donor is histidine 255. Residue histidine 281 coordinates Zn(2+). Residue 281 to 283 (HDH) coordinates substrate. Residue histidine 283 participates in Fe cation binding.

It belongs to the metallophosphoesterase superfamily. Purple acid phosphatase family. In terms of assembly, homodimer. Fe cation is required as a cofactor. The cofactor is Zn(2+). In terms of tissue distribution, expressed in stems, leaves, flowers and siliques.

The protein localises to the secreted. It carries out the reaction a phosphate monoester + H2O = an alcohol + phosphate. This chain is Purple acid phosphatase 3 (PAP3), found in Arabidopsis thaliana (Mouse-ear cress).